Reading from the N-terminus, the 395-residue chain is Guanine nucleotide-binding protein subunit beta-5 (395 aa).

WD repeat units follow at residues 103–142, 145–184, 193–234, 236–278, 279–318, 320–362, and 365–394; these read GHGNKVLCMDWCKDKRRIVSSSQDGKVIVWDSFTTNKEHA, MPCTWVMACAYAPSGCAIACGGLDNKCSVYPLTFDKNENM, MHTN…QSFH, HGAD…QAFE, THESDVNSVRYYPSGDAFASGSDDATCRLYDLRADREVAI, SKES…RVSI, and GHENRVSTLRVSPDGTAFCSGSWDHTLRVW.

This sequence belongs to the WD repeat G protein beta family. Component of a complex composed of RGS9 (isoform RGS9-1), GNB5 and RGS9BP; within this complex, the presence of GNB5 stabilizes both itself and RGS9 and increases RGS9 GTPase-activating protein (GAP) activity. Interacts with RGS7, forming the RGS7-GNB5 complex; within this complex, the presence of GNB5 increases RGS7 GTPase-activating protein (GAP) activity. Interacts with GPR158; promotes the GTPase activator activity of the RGS7-GNB5 complex in absence of glycine, in contrast GTPase activator activity of the RGS7-GNB5 complex is inhibited in presence of glycine. Interacts with RGS6. In terms of tissue distribution, isoform 1 is only detected in retina. Isoform 2 is detected in brain (at protein level). Isoform 2 is detected in brain.

It localises to the membrane. Its function is as follows. Enhances GTPase-activating protein (GAP) activity of regulator of G protein signaling (RGS) proteins, such as RGS7 and RGS9, hence involved in the termination of the signaling initiated by the G protein coupled receptors (GPCRs) by accelerating the GTP hydrolysis on the G-alpha subunits, thereby promoting their inactivation. Increases RGS7 GTPase-activating protein (GAP) activity, thereby regulating mood and cognition. Increases RGS9 GTPase-activating protein (GAP) activity, hence contributes to the deactivation of G protein signaling initiated by D(2) dopamine receptors. May play an important role in neuronal signaling, including in the parasympathetic, but not sympathetic, control of heart rate. This chain is Guanine nucleotide-binding protein subunit beta-5 (Gnb5), found in Mus musculus (Mouse).